Consider the following 508-residue polypeptide: Mitochondrial distribution and morphology protein 10 (508 aa).

The disordered stretch occupies residues 160-195; the sequence is PAHPTSTRPTPPQTPPSHTRQPSEPSTPAPSPTPGN.

The protein belongs to the MDM10 family. As to quaternary structure, component of the ER-mitochondria encounter structure (ERMES) or MDM complex, composed of MMM1, MDM10, MDM12 and MDM34. Associates with the mitochondrial outer membrane sorting assembly machinery SAM(core) complex.

Its subcellular location is the mitochondrion outer membrane. In terms of biological role, component of the ERMES/MDM complex, which serves as a molecular tether to connect the endoplasmic reticulum and mitochondria. Components of this complex are involved in the control of mitochondrial shape and protein biogenesis and may function in phospholipid exchange. MDM10 is involved in the late assembly steps of the general translocase of the mitochondrial outer membrane (TOM complex). Functions in the TOM40-specific route of the assembly of outer membrane beta-barrel proteins, including the association of TOM40 with the receptor TOM22 and small TOM proteins. Can associate with the SAM(core) complex as well as the MDM12-MMM1 complex, both involved in late steps of the major beta-barrel assembly pathway, that is responsible for biogenesis of all outer membrane beta-barrel proteins. May act as a switch that shuttles between both complexes and channels precursor proteins into the TOM40-specific pathway. Plays a role in mitochondrial morphology and in the inheritance of mitochondria. This chain is Mitochondrial distribution and morphology protein 10, found in Cryptococcus neoformans var. neoformans serotype D (strain B-3501A) (Filobasidiella neoformans).